A 367-amino-acid polypeptide reads, in one-letter code: Trans-enoyl reductase opdC (367 aa).

Residues 47–50, 199–202, tyrosine 217, 264–265, and 353–354 each bind NADP(+); these read YDAK, SPHN, LD, and IT.

Belongs to the zinc-containing alcohol dehydrogenase family. As to quaternary structure, monomer.

Its pathway is secondary metabolite biosynthesis. In terms of biological role, trans-enoyl reductase; part of the gene cluster that mediates the biosynthesis of oxopyrrolidines, polyketide-amino acid hybrid compounds with feature structures of tetramic acid. The polyketide chain is first assembled by the highly reducing PKS module of opdA using acetyl-CoA as the starter unit and five malonyl-CoA as the extender units. OpdC acts as a trans-acting enoyl reductase and reduces the terminal alkenyl to alkane. The 17R in oxopyrrolidine A and 15R, 17S in oxopyrrolidine B are generated by non-stereospecific catalysis of the ketoreductase (KR) domain and enoyl reductases. Then the polyketides with specific configurations are transferred to the NRPS module of opdA and linked to L-tyrosine to form an amide bond. Finally, the oxopyrrolidines are offloaded through a Dieckmann cyclization catalyzed by the terminal D domain to give a tetramic acid moiety. This Penicillium oxalicum (strain 114-2 / CGMCC 5302) (Penicillium decumbens) protein is Trans-enoyl reductase opdC.